Reading from the N-terminus, the 61-residue chain is Small ribosomal subunit protein uS14 (61 aa).

Zn(2+)-binding residues include Cys-24, Cys-27, Cys-40, and Cys-43.

This sequence belongs to the universal ribosomal protein uS14 family. Zinc-binding uS14 subfamily. In terms of assembly, part of the 30S ribosomal subunit. Contacts proteins S3 and S10. It depends on Zn(2+) as a cofactor.

In terms of biological role, binds 16S rRNA, required for the assembly of 30S particles and may also be responsible for determining the conformation of the 16S rRNA at the A site. This chain is Small ribosomal subunit protein uS14, found in Streptococcus equi subsp. zooepidemicus (strain H70).